Reading from the N-terminus, the 209-residue chain is Uracil phosphoribosyltransferase (209 aa).

5-phospho-alpha-D-ribose 1-diphosphate is bound by residues arginine 79, arginine 104, and 131 to 139 (DPMLATGGS). Uracil is bound by residues isoleucine 194 and 199–201 (GDA). Residue aspartate 200 participates in 5-phospho-alpha-D-ribose 1-diphosphate binding.

This sequence belongs to the UPRTase family. Mg(2+) is required as a cofactor.

The catalysed reaction is UMP + diphosphate = 5-phospho-alpha-D-ribose 1-diphosphate + uracil. The protein operates within pyrimidine metabolism; UMP biosynthesis via salvage pathway; UMP from uracil: step 1/1. With respect to regulation, allosterically activated by GTP. Its function is as follows. Catalyzes the conversion of uracil and 5-phospho-alpha-D-ribose 1-diphosphate (PRPP) to UMP and diphosphate. The sequence is that of Uracil phosphoribosyltransferase from Streptococcus sanguinis (strain SK36).